Reading from the N-terminus, the 397-residue chain is CCA-adding enzyme (397 aa).

2 residues coordinate ATP: Gly-26 and Arg-29. CTP contacts are provided by Gly-26 and Arg-29. Mg(2+) is bound by residues Asp-39 and Asp-41. The ATP site is built by Arg-110, Asp-153, Arg-156, Arg-159, and Arg-162. Residues Arg-110, Asp-153, Arg-156, Arg-159, and Arg-162 each coordinate CTP.

Belongs to the tRNA nucleotidyltransferase/poly(A) polymerase family. Bacterial CCA-adding enzyme type 3 subfamily. In terms of assembly, homodimer. It depends on Mg(2+) as a cofactor.

It carries out the reaction a tRNA precursor + 2 CTP + ATP = a tRNA with a 3' CCA end + 3 diphosphate. It catalyses the reaction a tRNA with a 3' CCA end + 2 CTP + ATP = a tRNA with a 3' CCACCA end + 3 diphosphate. In terms of biological role, catalyzes the addition and repair of the essential 3'-terminal CCA sequence in tRNAs without using a nucleic acid template. Adds these three nucleotides in the order of C, C, and A to the tRNA nucleotide-73, using CTP and ATP as substrates and producing inorganic pyrophosphate. tRNA 3'-terminal CCA addition is required both for tRNA processing and repair. Also involved in tRNA surveillance by mediating tandem CCA addition to generate a CCACCA at the 3' terminus of unstable tRNAs. While stable tRNAs receive only 3'-terminal CCA, unstable tRNAs are marked with CCACCA and rapidly degraded. The chain is CCA-adding enzyme from Bacillus cereus (strain G9842).